The primary structure comprises 169 residues: Transcription antitermination protein NusB (169 aa).

Residues 1-20 (MAESSNKPFRGPVRANDRKA) are disordered.

This sequence belongs to the NusB family.

Functionally, involved in transcription antitermination. Required for transcription of ribosomal RNA (rRNA) genes. Binds specifically to the boxA antiterminator sequence of the ribosomal RNA (rrn) operons. The chain is Transcription antitermination protein NusB from Bradyrhizobium sp. (strain BTAi1 / ATCC BAA-1182).